Here is a 128-residue protein sequence, read N- to C-terminus: UPF0102 protein Rfer_3873 (128 aa).

A compositionally biased stretch (polar residues) spans methionine 1–glutamine 15. The segment at methionine 1–alanine 20 is disordered.

Belongs to the UPF0102 family.

This is UPF0102 protein Rfer_3873 from Albidiferax ferrireducens (strain ATCC BAA-621 / DSM 15236 / T118) (Rhodoferax ferrireducens).